Consider the following 2013-residue polypeptide: Centrosomal protein 224 (2013 aa).

5 HEAT repeats span residues 115–153 (TIEADSAEPVVEALLKGTSSTSPKILLASLAALTQALKT), 158–196 (QIPVKLILKQFSPWFENRDKGIRDQASELFIEIYRWIGK), 200–238 (PLISEALTPIQLKALQDQFEKLPTDPAVPLKYTRSEAAK), 348–386 (TSYVKPFITPILEKFKEKKTSVLQSVHTTMDSLVGKSIS), and 427–465 (TKVTKQLTKIFMEALNDTDSNIRDNASKAFAALGGIIGE). Residues 512-557 (PVSSSNKKPAAATGNSKSSSTTTPTGRSSNSSPLPPPPSSSDDIKN) form a disordered region. Residues 524-543 (TGNSKSSSTTTPTGRSSNSS) are compositionally biased toward low complexity. HEAT repeat units follow at residues 724–762 (IQQLKPLLDYTKQCLESTNPDVKKSAIKLLCTIKINIGA), 816–854 (VDISVKLTPAIITNLSDANWKTRSDALDEIERIIIDANR), 857–895 (QPKLGGLIPALKNRLTDNNQKCTITTLNIIGMLSQAMGG), 899–937 (EKHARLLIPGILLLLGDSKKPVRDAVISCMNVIVQSDLG), and 977–1015 (PSEINTLAKGIISCLQDKSAEIRSLADNLLSILCTQIPL). The disordered stretch occupies residues 1043–1109 (KTGQPIPPPS…QQQQRRSILQ (67 aa)). The segment covering 1053-1106 (KTKQSTSSSSSSSSTTSQQSSTPSSPQPIRQQQQQQQQQPTQPQQQQQQQQRRS) has biased composition (low complexity). HEAT repeat units lie at residues 1240–1279 (EYEASCLVPILLEKSGSATNEQIKQIFKQSIQQLEELCLP), 1281–1314 (VLFRFAIEMVTSQNWRTRVEVLNVMASIIDKNGA), and 1317–1353 (CGNLKVVIPLITQNLNDSQSKQSSLLCLNKLYSHIKD). 3 stretches are compositionally biased toward low complexity: residues 1372–1406 (NNNNNNNNNNNNNNNNNNNNVQQQQQQQQQQQQQQ), 1695–1735 (NRIS…INSS), and 1746–1796 (SNNT…TLST). Disordered stretches follow at residues 1372 to 1413 (NNNN…SLST), 1695 to 1809 (NRIS…YSGK), 1905 to 1949 (NQPS…IAPQ), and 1966 to 1995 (TLNPDQNSGSNNNNSHQNSPSTSSSNDLNS). Basic and acidic residues predominate over residues 1799 to 1809 (INKEPRDYSGK). Over residues 1913–1939 (NNNNNNNNNNNNNNNNNINNNNNNNNN) the composition is skewed to low complexity. Residues 1940 to 1949 (SGGNENIAPQ) are compositionally biased toward polar residues. The span at 1967 to 1995 (LNPDQNSGSNNNNSHQNSPSTSSSNDLNS) shows a compositional bias: low complexity.

Belongs to the TOG/XMAP215 family. As to quaternary structure, interacts with eb1 at the microtubule tip, centrosome and kinetochore. Interacts with lis1 in the cortical attachment of microtubules.

It localises to the cytoplasm. The protein resides in the cytoskeleton. It is found in the microtubule organizing center. The protein localises to the centrosome. Its subcellular location is the chromosome. It localises to the centromere. The protein resides in the kinetochore. Its function is as follows. Involved in regulation of microtubule dynamics. Regulates the interaction of microtubules tips with the centrosome and cell cortex. The protein is Centrosomal protein 224 (mtaA) of Dictyostelium discoideum (Social amoeba).